Reading from the N-terminus, the 609-residue chain is UvrABC system protein C (609 aa).

Residues 13 to 91 (HQPGVYRMFD…IKAFQPRYNV (79 aa)) form the GIY-YIG domain. Residues 201–236 (QQVLEHLIKKMEQASMQLNFEQAAYFRDQIQAIRAV) enclose the UVR domain.

The protein belongs to the UvrC family. As to quaternary structure, interacts with UvrB in an incision complex.

Its subcellular location is the cytoplasm. Its function is as follows. The UvrABC repair system catalyzes the recognition and processing of DNA lesions. UvrC both incises the 5' and 3' sides of the lesion. The N-terminal half is responsible for the 3' incision and the C-terminal half is responsible for the 5' incision. The protein is UvrABC system protein C of Histophilus somni (strain 2336) (Haemophilus somnus).